Reading from the N-terminus, the 209-residue chain is Orotate phosphoribosyltransferase (209 aa).

5-phospho-alpha-D-ribose 1-diphosphate contacts are provided by residues Arg96, Lys100, His102, and 122 to 130 (EDLISTGKS). Ser126 is an orotate binding site.

It belongs to the purine/pyrimidine phosphoribosyltransferase family. PyrE subfamily. In terms of assembly, homodimer. Requires Mg(2+) as cofactor.

The enzyme catalyses orotidine 5'-phosphate + diphosphate = orotate + 5-phospho-alpha-D-ribose 1-diphosphate. It participates in pyrimidine metabolism; UMP biosynthesis via de novo pathway; UMP from orotate: step 1/2. Functionally, catalyzes the transfer of a ribosyl phosphate group from 5-phosphoribose 1-diphosphate to orotate, leading to the formation of orotidine monophosphate (OMP). In Coxiella burnetii (strain RSA 493 / Nine Mile phase I), this protein is Orotate phosphoribosyltransferase.